The chain runs to 467 residues: MTTGKIVQIIGAVVDVEFPQGEVPRVYDALNVVDAQERLVLEVQQQIGGGVVRCIVMGSSDGLRRGLTVENTGAPISVPVGTKTLGRIMNVLGDAIDECGDIDAEEHYAIHREAPSYEEQSNSTELLETGVKVIDLVCPFAKGGKIGLFGGAGVGKTVNMMELINNIALQHSGLSVFAGVGERTREGNDFYFEMQEAGVVNIEKPEESKVAMVYGQMNEPPGNRLRVALTGLTMAERFRDEGRDVLLFVDNIYRYTLAGTEVSALLGRMPSAVGYQPTLAEEMGVLQERITSTKQGSITSVQAVYVPADDLTDPSPATTFAHLDATVVLNRNIAAMGLYPAIDPLDSTSRQLDPLVVGQEHYDVARGVQSTLQRYKELKDIIAILGMDELSEEDKQVVSRARKIEKFLTQPYHVAEVFTGDPGIYVPLKDTLAGFKGLLAGDYDDVPEQAFMYCGKIEDALEKAKKL.

150–157 is a binding site for ATP; the sequence is GGAGVGKT.

The protein belongs to the ATPase alpha/beta chains family. In terms of assembly, F-type ATPases have 2 components, CF(1) - the catalytic core - and CF(0) - the membrane proton channel. CF(1) has five subunits: alpha(3), beta(3), gamma(1), delta(1), epsilon(1). CF(0) has three main subunits: a(1), b(2) and c(9-12). The alpha and beta chains form an alternating ring which encloses part of the gamma chain. CF(1) is attached to CF(0) by a central stalk formed by the gamma and epsilon chains, while a peripheral stalk is formed by the delta and b chains.

Its subcellular location is the cell inner membrane. The enzyme catalyses ATP + H2O + 4 H(+)(in) = ADP + phosphate + 5 H(+)(out). Its function is as follows. Produces ATP from ADP in the presence of a proton gradient across the membrane. The catalytic sites are hosted primarily by the beta subunits. This Aliivibrio fischeri (strain MJ11) (Vibrio fischeri) protein is ATP synthase subunit beta.